A 91-amino-acid polypeptide reads, in one-letter code: Potassium channel toxin AaTXK-beta (91 aa).

The signal sequence occupies residues 1-19 (MQRNLVVLLFLGMVALSSC). Residues 20–27 (GLREKHVQ) constitute a propeptide that is removed on maturation. A BetaSPN-type CS-alpha/beta domain is found at 54–91 (QFGCPAYQGYCDDHCQDIKKEEGFCHGFKCKCGIPMGF). 3 disulfide bridges follow: cysteine 57/cysteine 78, cysteine 64/cysteine 83, and cysteine 68/cysteine 85.

The protein belongs to the long chain scorpion toxin family. Class 1 subfamily. As to quaternary structure, monomer (both chains). Expressed by the venom gland.

The protein resides in the secreted. Inhibits voltage-gated potassium channels (Kv). Does not activate Kv7 channels. In terms of biological role, peptide activator of Kv7.4/KCNQ4 channels. Also acts as a subtype-selective activator of channels formed by Kv7.3/KCNQ3, Kv7.2/Kv7.3 (KCNQ2/KCNQ3), Kv7.5/Kv7.3 (KCNQ3/KCNQ5) subunits. This chain is Potassium channel toxin AaTXK-beta, found in Androctonus australis (Sahara scorpion).